The following is a 407-amino-acid chain: 8-amino-7-oxononanoate synthase (407 aa).

Arg24 provides a ligand contact to substrate. 111 to 112 is a binding site for pyridoxal 5'-phosphate; the sequence is GF. Residue His137 coordinates substrate. Positions 183, 211, and 239 each coordinate pyridoxal 5'-phosphate. Lys242 is modified (N6-(pyridoxal phosphate)lysine). Thr356 serves as a coordination point for substrate.

The protein belongs to the class-II pyridoxal-phosphate-dependent aminotransferase family. BioF subfamily. Homodimer. Requires pyridoxal 5'-phosphate as cofactor.

The enzyme catalyses 6-carboxyhexanoyl-[ACP] + L-alanine + H(+) = (8S)-8-amino-7-oxononanoate + holo-[ACP] + CO2. It participates in cofactor biosynthesis; biotin biosynthesis. Its function is as follows. Catalyzes the decarboxylative condensation of pimeloyl-[acyl-carrier protein] and L-alanine to produce 8-amino-7-oxononanoate (AON), [acyl-carrier protein], and carbon dioxide. This chain is 8-amino-7-oxononanoate synthase, found in Stenotrophomonas maltophilia (strain R551-3).